The sequence spans 247 residues: Type III pantothenate kinase (247 aa).

6–13 contacts ATP; that stretch reads DVGNTSIY. Residue 102–105 participates in substrate binding; the sequence is GADL. The active-site Proton acceptor is Asp104. Asp122 is a binding site for K(+). Residue Thr125 participates in ATP binding. A substrate-binding site is contributed by Thr176.

The protein belongs to the type III pantothenate kinase family. In terms of assembly, homodimer. It depends on NH4(+) as a cofactor. The cofactor is K(+).

Its subcellular location is the cytoplasm. It catalyses the reaction (R)-pantothenate + ATP = (R)-4'-phosphopantothenate + ADP + H(+). The protein operates within cofactor biosynthesis; coenzyme A biosynthesis; CoA from (R)-pantothenate: step 1/5. Its function is as follows. Catalyzes the phosphorylation of pantothenate (Pan), the first step in CoA biosynthesis. This Acholeplasma laidlawii (strain PG-8A) protein is Type III pantothenate kinase.